The following is a 1210-amino-acid chain: DNA-directed RNA polymerase II subunit RPB2 (1210 aa).

Position 826 (Asp-826) interacts with Mg(2+). 4 residues coordinate Zn(2+): Cys-1152, Cys-1155, Cys-1170, and Cys-1173. The C4-type zinc finger occupies Cys-1152 to Cys-1173.

This sequence belongs to the RNA polymerase beta chain family. In terms of assembly, component of the RNA polymerase II (Pol II) complex consisting of 12 subunits.

It is found in the nucleus. The catalysed reaction is RNA(n) + a ribonucleoside 5'-triphosphate = RNA(n+1) + diphosphate. Its function is as follows. DNA-dependent RNA polymerase catalyzes the transcription of DNA into RNA using the four ribonucleoside triphosphates as substrates. Second largest component of RNA polymerase II which synthesizes mRNA precursors and many functional non-coding RNAs. Proposed to contribute to the polymerase catalytic activity and forms the polymerase active center together with the largest subunit. Pol II is the central component of the basal RNA polymerase II transcription machinery. It is composed of mobile elements that move relative to each other. RPB2 is part of the core element with the central large cleft, the clamp element that moves to open and close the cleft and the jaws that are thought to grab the incoming DNA template. The polypeptide is DNA-directed RNA polymerase II subunit RPB2 (rpb2) (Schizosaccharomyces pombe (strain 972 / ATCC 24843) (Fission yeast)).